The chain runs to 294 residues: Urease accessory protein UreD (294 aa).

The interval 1–22 (MSVEKPVAAGRQNSKATGRHKG) is disordered.

This sequence belongs to the UreD family. As to quaternary structure, ureD, UreF and UreG form a complex that acts as a GTP-hydrolysis-dependent molecular chaperone, activating the urease apoprotein by helping to assemble the nickel containing metallocenter of UreC. The UreE protein probably delivers the nickel.

It localises to the cytoplasm. Its function is as follows. Required for maturation of urease via the functional incorporation of the urease nickel metallocenter. In Alcanivorax borkumensis (strain ATCC 700651 / DSM 11573 / NCIMB 13689 / SK2), this protein is Urease accessory protein UreD.